The following is a 107-amino-acid chain: Flagellar transcriptional regulator FlhD (107 aa).

This sequence belongs to the FlhD family. Homodimer; disulfide-linked. Forms a heterohexamer composed of two FlhC and four FlhD subunits. Each FlhC binds a FlhD dimer, forming a heterotrimer, and a hexamer assembles by dimerization of two heterotrimers.

It is found in the cytoplasm. In terms of biological role, functions in complex with FlhC as a master transcriptional regulator that regulates transcription of several flagellar and non-flagellar operons by binding to their promoter region. Activates expression of class 2 flagellar genes, including fliA, which is a flagellum-specific sigma factor that turns on the class 3 genes. Also regulates genes whose products function in a variety of physiological pathways. In Bordetella pertussis (strain Tohama I / ATCC BAA-589 / NCTC 13251), this protein is Flagellar transcriptional regulator FlhD.